The following is a 555-amino-acid chain: Gamma-aminobutyric acid receptor subunit alpha-4 (555 aa).

The first 35 residues, 1–35 (MVSAKKVPAIAMSFGVSFALLHFLCLAACLNESPG), serve as a signal peptide directing secretion. At 36–259 (QNQKEEKLCP…FHLRRKMGYF (224 aa)) the chain is on the extracellular side. Asparagine 47 is a glycosylation site (N-linked (GlcNAc...) asparagine). 4-aminobutanoate is bound at residue arginine 100. Residues asparagine 144 and asparagine 157 are each glycosylated (N-linked (GlcNAc...) asparagine). Threonine 163 lines the 4-aminobutanoate pocket. The cysteines at positions 172 and 186 are disulfide-linked. A helical membrane pass occupies residues 260–280 (MIQTYIPCIMTVILSQVSFWI). The Cytoplasmic segment spans residues 281–284 (NKES). Residues 285–305 (VPARTVFGITTVLTMTTLSIS) traverse the membrane as a helical segment. Topologically, residues 306–318 (ARHSLPKVSYATA) are extracellular. A helical transmembrane segment spans residues 319–341 (MDWFIAVCFAFVFSALIEFAAVN). At 342 to 518 (YFTNVQMEKA…PPPSGSGTSK (177 aa)) the chain is on the cytoplasmic side. Disordered stretches follow at residues 354-435 (KTSK…SPNP) and 495-516 (GTSG…GSGT). Positions 410-421 (SSKSSTVVQGSS) are enriched in low complexity. Over residues 422–435 (EATPQSYLASSPNP) the composition is skewed to polar residues. Residues 519 to 545 (IDKYARILFPVTFGAFNMVYWVVYLSK) traverse the membrane as a helical segment. The Extracellular segment spans residues 546 to 555 (DTMEKSESLM).

The protein belongs to the ligand-gated ion channel (TC 1.A.9) family. Gamma-aminobutyric acid receptor (TC 1.A.9.5) subfamily. GABRA4 sub-subfamily. Heteropentamer, formed by a combination of alpha (GABRA1-6), beta (GABRB1-3), gamma (GABRG1-3), delta (GABRD), epsilon (GABRE), rho (GABRR1-3), pi (GABRP) and theta (GABRQ) chains, each subunit exhibiting distinct physiological and pharmacological properties. As to expression, expressed in the brain.

The protein localises to the cell membrane. Its subcellular location is the postsynaptic cell membrane. The enzyme catalyses chloride(in) = chloride(out). With respect to regulation, potentiated by histamine. In terms of biological role, alpha subunit of the heteropentameric ligand-gated chloride channel gated by gamma-aminobutyric acid (GABA), a major inhibitory neurotransmitter in the brain. GABA-gated chloride channels, also named GABA(A) receptors (GABAAR), consist of five subunits arranged around a central pore and contain GABA active binding site(s) located at the alpha and beta subunit interface(s). When activated by GABA, GABAARs selectively allow the flow of chloride anions across the cell membrane down their electrochemical gradient. GABAARs containing alpha-4 are predominantly extrasynaptic, contributing to tonic inhibition in dentate granule cells and thalamic relay neurons. Extrasynaptic alpha-4-containing GABAARs control levels of excitability and network activity. GABAARs containing alpha-4 are often found with the delta or gamma-2 subunits, in combination with beta subunits. GABAAR containing alpha-4-beta-3-delta subunits can simultaneously bind GABA and histamine where histamine binds at the interface of two neighboring beta subunits, which may be involved in the regulation of sleep and wakefulness. The sequence is that of Gamma-aminobutyric acid receptor subunit alpha-4 (GABRA4) from Bos taurus (Bovine).